The primary structure comprises 426 residues: 3-phosphoshikimate 1-carboxyvinyltransferase (426 aa).

Lys-22, Ser-23, and Arg-27 together coordinate 3-phosphoshikimate. Lys-22 lines the phosphoenolpyruvate pocket. Residues Gly-96 and Arg-124 each coordinate phosphoenolpyruvate. 3-phosphoshikimate is bound by residues Ser-170 and Ser-171. Position 172 (Gln-172) interacts with phosphoenolpyruvate. 3-phosphoshikimate-binding residues include Ser-198, Asp-314, Asn-337, and Lys-341. Asp-314 serves as the catalytic Proton acceptor. Positions 345, 387, and 412 each coordinate phosphoenolpyruvate.

It belongs to the EPSP synthase family. As to quaternary structure, homotetramer.

The protein resides in the cytoplasm. It carries out the reaction 3-phosphoshikimate + phosphoenolpyruvate = 5-O-(1-carboxyvinyl)-3-phosphoshikimate + phosphate. It functions in the pathway metabolic intermediate biosynthesis; chorismate biosynthesis; chorismate from D-erythrose 4-phosphate and phosphoenolpyruvate: step 6/7. Catalyzes the transfer of the enolpyruvyl moiety of phosphoenolpyruvate (PEP) to the 5-hydroxyl of shikimate-3-phosphate (S3P) to produce enolpyruvyl shikimate-3-phosphate and inorganic phosphate. The polypeptide is 3-phosphoshikimate 1-carboxyvinyltransferase (Vibrio cholerae serotype O1 (strain ATCC 39315 / El Tor Inaba N16961)).